Consider the following 267-residue polypeptide: Hydroxyethylthiazole kinase (267 aa).

M46 lines the substrate pocket. ATP-binding residues include R122 and S168. G195 is a substrate binding site.

It belongs to the Thz kinase family. The cofactor is Mg(2+).

The enzyme catalyses 5-(2-hydroxyethyl)-4-methylthiazole + ATP = 4-methyl-5-(2-phosphooxyethyl)-thiazole + ADP + H(+). Its pathway is cofactor biosynthesis; thiamine diphosphate biosynthesis; 4-methyl-5-(2-phosphoethyl)-thiazole from 5-(2-hydroxyethyl)-4-methylthiazole: step 1/1. Its function is as follows. Catalyzes the phosphorylation of the hydroxyl group of 4-methyl-5-beta-hydroxyethylthiazole (THZ). This is Hydroxyethylthiazole kinase from Nitratidesulfovibrio vulgaris (strain DSM 19637 / Miyazaki F) (Desulfovibrio vulgaris).